Reading from the N-terminus, the 135-residue chain is uncharacterized protein (135 aa).

The Response regulatory domain maps to 13 to 129; that stretch reads QVLIAENSRF…KILEKVNAAI (117 aa). Asp-64 carries the post-translational modification 4-aspartylphosphate.

This is an uncharacterized protein from Leptospira interrogans serogroup Icterohaemorrhagiae serovar copenhageni (strain Fiocruz L1-130).